The following is a 171-amino-acid chain: Endoribonuclease YbeY (171 aa).

3 residues coordinate Zn(2+): histidine 130, histidine 134, and histidine 140.

The protein belongs to the endoribonuclease YbeY family. Zn(2+) serves as cofactor.

It localises to the cytoplasm. Functionally, single strand-specific metallo-endoribonuclease involved in late-stage 70S ribosome quality control and in maturation of the 3' terminus of the 16S rRNA. This chain is Endoribonuclease YbeY, found in Neisseria gonorrhoeae (strain ATCC 700825 / FA 1090).